A 211-amino-acid chain; its full sequence is Uracil phosphoribosyltransferase (211 aa).

Residues Arg78, Arg103, and 130-138 (DPMLATGGT) contribute to the 5-phospho-alpha-D-ribose 1-diphosphate site. Residues Ile196 and 201 to 203 (GDA) contribute to the uracil site. Asp202 is a 5-phospho-alpha-D-ribose 1-diphosphate binding site.

The protein belongs to the UPRTase family. Mg(2+) is required as a cofactor.

The catalysed reaction is UMP + diphosphate = 5-phospho-alpha-D-ribose 1-diphosphate + uracil. It participates in pyrimidine metabolism; UMP biosynthesis via salvage pathway; UMP from uracil: step 1/1. Its activity is regulated as follows. Allosterically activated by GTP. Its function is as follows. Catalyzes the conversion of uracil and 5-phospho-alpha-D-ribose 1-diphosphate (PRPP) to UMP and diphosphate. The chain is Uracil phosphoribosyltransferase from Kineococcus radiotolerans (strain ATCC BAA-149 / DSM 14245 / SRS30216).